The following is a 281-amino-acid chain: NADH-cytochrome b5 reductase 1 (281 aa).

The chain crosses the membrane as a helical span at residues 2–22 (VPGKFIFTATFVLLCTIIAVV). The FAD-binding FR-type domain maps to 37–141 (EKLQEFPLVA…RGPKGFYHYQ (105 aa)). Residues 121-136 (AQLN…GPKG) and 147-179 (EIGM…KVSL) contribute to the FAD site.

This sequence belongs to the flavoprotein pyridine nucleotide cytochrome reductase family. In terms of assembly, monomer. Component of the 2-(3-amino-3-carboxypropyl)histidine synthase complex composed of DPH1, DPH2, DPH3 and a NADH-dependent reductase, predominantly CBR1. FAD is required as a cofactor.

It localises to the mitochondrion outer membrane. It catalyses the reaction 2 Fe(III)-[cytochrome b5] + NADH = 2 Fe(II)-[cytochrome b5] + NAD(+) + H(+). The enzyme catalyses 2 Fe(3+)-[Dph3] + NADH = 2 Fe(2+)-[Dph3] + NAD(+) + H(+). It participates in protein modification; peptidyl-diphthamide biosynthesis. Functionally, NADH-dependent reductase for DPH3 and cytochrome b5. Required for the first step of diphthamide biosynthesis, a post-translational modification of histidine which occurs in elongation factor 2. DPH1 and DPH2 transfer a 3-amino-3-carboxypropyl (ACP) group from S-adenosyl-L-methionine (SAM) to a histidine residue, the reaction is assisted by a reduction system comprising DPH3 and a NADH-dependent reductase, predominantly CBR1. By reducing DPH3, also involved in the formation of the tRNA wobble base modification mcm5s 2U (5-methoxycarbonylmethyl-2-thiouridine), mediated by the elongator complex. The cytochrome b5/NADH cytochrome b5 reductase electron transfer system supports the catalytic activity of several sterol biosynthetic enzymes. This chain is NADH-cytochrome b5 reductase 1 (CBR1), found in Kluyveromyces lactis (strain ATCC 8585 / CBS 2359 / DSM 70799 / NBRC 1267 / NRRL Y-1140 / WM37) (Yeast).